Reading from the N-terminus, the 66-residue chain is uncharacterized protein (66 aa).

This is an uncharacterized protein from Bacillus subtilis (strain 168).